The primary structure comprises 289 residues: Prepilin leader peptidase/N-methyltransferase (289 aa).

A helical transmembrane segment spans residues 13–33; it reads AFVLCALVLGLLVGSFLNVVI. Zn(2+) is bound by residues Cys-72, Cys-75, Cys-97, and Cys-100. The next 5 membrane-spanning stretches (helical) occupy residues 128–148, 159–179, 183–203, 228–248, and 256–276; these read FSWQAGAMLLLTWGLLAMSMI, LVLPLLWLGLIINSFGLFASL, LWGAVVGYLALWSVYWLFKLV, VLPLTILLSSVVGAVLGTVML, and GTPIPFGPYLAIAGWVALLWG.

The protein belongs to the peptidase A24 family. Requires Zn(2+) as cofactor.

Its subcellular location is the cell inner membrane. The enzyme catalyses Typically cleaves a -Gly-|-Phe- bond to release an N-terminal, basic peptide of 5-8 residues from type IV prepilin, and then N-methylates the new N-terminal amino group, the methyl donor being S-adenosyl-L-methionine.. Plays an essential role in type IV pili and type II pseudopili formation by proteolytically removing the leader sequence from substrate proteins and subsequently monomethylating the alpha-amino group of the newly exposed N-terminal phenylalanine. This chain is Prepilin leader peptidase/N-methyltransferase (pilD), found in Stutzerimonas stutzeri (Pseudomonas stutzeri).